The following is an 82-amino-acid chain: Small ribosomal subunit protein bS16 (82 aa).

It belongs to the bacterial ribosomal protein bS16 family.

The protein is Small ribosomal subunit protein bS16 of Alcanivorax borkumensis (strain ATCC 700651 / DSM 11573 / NCIMB 13689 / SK2).